A 225-amino-acid chain; its full sequence is ATP synthase subunit a (225 aa).

The next 5 membrane-spanning stretches (helical) occupy residues 16–36 (LFVY…VAKL), 79–99 (LVAT…IPGF), 105–125 (SLNL…FEGI), 176–196 (LFLL…AYAL), and 202–222 (VLQT…AVAI).

Belongs to the ATPase A chain family. F-type ATPases have 2 components, CF(1) - the catalytic core - and CF(0) - the membrane proton channel. CF(1) has five subunits: alpha(3), beta(3), gamma(1), delta(1), epsilon(1). CF(0) has three main subunits: a(1), b(2) and c(9-12). The alpha and beta chains form an alternating ring which encloses part of the gamma chain. CF(1) is attached to CF(0) by a central stalk formed by the gamma and epsilon chains, while a peripheral stalk is formed by the delta and b chains.

Its subcellular location is the cell inner membrane. Its function is as follows. Key component of the proton channel; it plays a direct role in the translocation of protons across the membrane. The chain is ATP synthase subunit a from Campylobacter curvus (strain 525.92).